Here is a 214-residue protein sequence, read N- to C-terminus: Probable nicotinate-nucleotide adenylyltransferase (214 aa).

It belongs to the NadD family.

It catalyses the reaction nicotinate beta-D-ribonucleotide + ATP + H(+) = deamido-NAD(+) + diphosphate. Its pathway is cofactor biosynthesis; NAD(+) biosynthesis; deamido-NAD(+) from nicotinate D-ribonucleotide: step 1/1. Functionally, catalyzes the reversible adenylation of nicotinate mononucleotide (NaMN) to nicotinic acid adenine dinucleotide (NaAD). This is Probable nicotinate-nucleotide adenylyltransferase from Mycobacterium bovis (strain ATCC BAA-935 / AF2122/97).